The following is a 503-amino-acid chain: Legumin J (503 aa).

A signal peptide spans 1-22 (MSKPFLSLLSLSLLLFASACLA). Intrachain disulfides connect Cys33-Cys66 and Cys109-Cys329. The region spanning 38-257 (INALEPDHRV…TFNTEEDTAK (220 aa)) is the Cupin type-1 1 domain. 3 disordered regions span residues 111 to 140 (ETYE…RRFR), 185 to 235 (FYLG…EGNS), and 253 to 323 (EDTA…RKNG). The span at 118–129 (SSQSRQESRQQQ) shows a compositional bias: low complexity. Composition is skewed to basic and acidic residues over residues 254–268 (DTAK…ERSQ) and 282–300 (KGKE…HREE). Positions 301-312 (KEEEEEEEEDEE) are enriched in acidic residues. Residues 313 to 323 (EKQRSEERKNG) show a composition bias toward basic and acidic residues. The region spanning 335-482 (ENIADAARAD…AFGLRQRQVT (148 aa)) is the Cupin type-1 2 domain.

It belongs to the 11S seed storage protein (globulins) family. In terms of assembly, hexamer; each subunit is composed of an acidic and a basic chain derived from a single precursor and linked by a disulfide bond.

This protein found in the seeds of many leguminous and non-leguminous plants is the source of sulfur-containing amino acids in seed meals. The polypeptide is Legumin J (LEGJ) (Pisum sativum (Garden pea)).